Reading from the N-terminus, the 287-residue chain is Light-independent protochlorophyllide reductase iron-sulfur ATP-binding protein (287 aa).

ATP is bound by residues 10-15 (GVGKST) and Lys39. Position 14 (Ser14) interacts with Mg(2+). Cys95 and Cys129 together coordinate [4Fe-4S] cluster. 181 to 182 (NR) serves as a coordination point for ATP.

Belongs to the NifH/BchL/ChlL family. As to quaternary structure, homodimer. Protochlorophyllide reductase is composed of three subunits; BchL, BchN and BchB. Requires [4Fe-4S] cluster as cofactor.

The catalysed reaction is chlorophyllide a + oxidized 2[4Fe-4S]-[ferredoxin] + 2 ADP + 2 phosphate = protochlorophyllide a + reduced 2[4Fe-4S]-[ferredoxin] + 2 ATP + 2 H2O. Its pathway is porphyrin-containing compound metabolism; bacteriochlorophyll biosynthesis (light-independent). Functionally, component of the dark-operative protochlorophyllide reductase (DPOR) that uses Mg-ATP and reduced ferredoxin to reduce ring D of protochlorophyllide (Pchlide) to form chlorophyllide a (Chlide). This reaction is light-independent. The L component serves as a unique electron donor to the NB-component of the complex, and binds Mg-ATP. The sequence is that of Light-independent protochlorophyllide reductase iron-sulfur ATP-binding protein from Heliobacterium modesticaldum (strain ATCC 51547 / Ice1).